The primary structure comprises 372 residues: Adaptive-response sensory kinase SasA (372 aa).

The Histidine kinase domain maps to 147–360; that stretch reads MVAHELRTPL…CFHFTVPVWQ (214 aa). A Phosphohistidine; by autocatalysis modification is found at His-150.

Homooligomerizes. Interacts with KaiC. Participates in the KaiBC complex, whose core is composed of a KaiC homohexamer and 6 KaiB.

The catalysed reaction is ATP + protein L-histidine = ADP + protein N-phospho-L-histidine.. In terms of biological role, member of the two-component regulatory system SasA/RpaA involved in genome-wide circadian gene expression. One of several clock output pathways. Participates in the Kai clock protein complex, the main circadian regulator in cyanobacteria, via its interaction with KaiC. KaiC enhances the autophosphorylation activity of SasA, which then transfers its phosphate group to RpaA to activate it. In addition to its output function, recruits fold-shifted KaiB (KaiB(fs)) to KaiC to cooperatively form the KaiB(6):KaiC(6) complex (independent of SasA kinase activity). Required for robustness of the circadian rhythm of gene expression and is involved in clock output, also required for adaptation to light/dark cycles. This chain is Adaptive-response sensory kinase SasA, found in Prochlorococcus marinus (strain MIT 9301).